The primary structure comprises 334 residues: Methionine adenosyltransferase 2 subunit beta (334 aa).

NADP(+) contacts are provided by residues 37–40 (TGLL), 60–62 (FRR), 71–72 (NL), cysteine 93, arginine 97, tyrosine 159, and leucine 185. The residue at position 309 (threonine 309) is a Phosphothreonine. Residues 319–334 (LWPFLIDKRWRQTVFH) form a required for interaction with MAT2A region.

Belongs to the dTDP-4-dehydrorhamnose reductase family. MAT2B subfamily. Heterotrimer; composed of a catalytic MAT2A homodimer that binds one regulatory MAT2B chain. Heterohexamer; composed of a central, catalytic MAT2A homotetramer flanked on either side by a regulatory MAT2B chain. NADP binding increases the affinity for MAT2A.

Its pathway is amino-acid biosynthesis; S-adenosyl-L-methionine biosynthesis; S-adenosyl-L-methionine from L-methionine: step 1/1. Regulatory subunit of S-adenosylmethionine synthetase 2, an enzyme that catalyzes the formation of S-adenosylmethionine from methionine and ATP. Regulates MAT2A catalytic activity by changing its kinetic properties, increasing its affinity for L-methionine. Can bind NADP (in vitro). This is Methionine adenosyltransferase 2 subunit beta (MAT2B) from Bos taurus (Bovine).